Consider the following 164-residue polypeptide: Cytochrome c-type biogenesis protein CcmE (164 aa).

The Cytoplasmic segment spans residues 1–8; sequence MNPRRKSR. A helical; Signal-anchor for type II membrane protein membrane pass occupies residues 9–29; it reads LYLAMVVLIGISLTTTLVLYA. Residues 30–164 lie on the Periplasmic side of the membrane; that stretch reads LRSNIDLFYT…RGTNTTGNAL (135 aa). Heme is bound by residues His-130 and Tyr-134. Residues 140-164 form a disordered region; that stretch reads EEAMKENHSRPAAAYRGTNTTGNAL.

This sequence belongs to the CcmE/CycJ family.

The protein resides in the cell inner membrane. Its function is as follows. Heme chaperone required for the biogenesis of c-type cytochromes. Transiently binds heme delivered by CcmC and transfers the heme to apo-cytochromes in a process facilitated by CcmF and CcmH. In Yersinia pseudotuberculosis serotype O:3 (strain YPIII), this protein is Cytochrome c-type biogenesis protein CcmE.